Here is a 297-residue protein sequence, read N- to C-terminus: MGKQRLNAAIIGPGNIGTDLMYKILRRSEYLELKLVAGIVAESEGLRLAREEGVATSAAGIQAILDRKDIDIVFDATTAHAHAQHAPLLKDAGIIAVDLTPAAVGPYVMPVVNLEEHIDAMNVNLITCGGQATIPIVYAISRVVPTAYAEIVATIASKSAGPGTRQNIDEFTLTTAKGIVDIGNAQKGKAIILLNPADPPMMMNNTIYALIDQVDPAIEQKITESVEEIIKEVQAFVPGYKLKIPPMFDGNKVTVMIEVEGSGDYLPQYSGNLDLETCAALAVAEKMAKHKLAAGAN.

Cys128 acts as the Acyl-thioester intermediate in catalysis. NAD(+) contacts are provided by residues 159–167 (SAGPGTRQN) and Asn272.

It belongs to the acetaldehyde dehydrogenase family.

It catalyses the reaction acetaldehyde + NAD(+) + CoA = acetyl-CoA + NADH + H(+). The sequence is that of Acetaldehyde dehydrogenase from Desulfitobacterium hafniense (strain DSM 10664 / DCB-2).